The sequence spans 285 residues: Pantothenate synthetase (285 aa).

Residue 30–37 coordinates ATP; it reads MGFLHEGH. The active-site Proton donor is H37. Position 61 (Q61) interacts with (R)-pantoate. Q61 serves as a coordination point for beta-alanine. Position 147-150 (147-150) interacts with ATP; the sequence is GQKD. Q153 contacts (R)-pantoate. ATP contacts are provided by residues V176 and 184–187; that span reads KSSR.

This sequence belongs to the pantothenate synthetase family. In terms of assembly, homodimer.

It localises to the cytoplasm. It catalyses the reaction (R)-pantoate + beta-alanine + ATP = (R)-pantothenate + AMP + diphosphate + H(+). It functions in the pathway cofactor biosynthesis; (R)-pantothenate biosynthesis; (R)-pantothenate from (R)-pantoate and beta-alanine: step 1/1. Catalyzes the condensation of pantoate with beta-alanine in an ATP-dependent reaction via a pantoyl-adenylate intermediate. The chain is Pantothenate synthetase from Listeria monocytogenes serovar 1/2a (strain ATCC BAA-679 / EGD-e).